Here is a 284-residue protein sequence, read N- to C-terminus: Nucleotide-binding protein Sputcn32_0712 (284 aa).

8–15 (GRSGSGKS) contributes to the ATP binding site. 56–59 (DVRN) lines the GTP pocket.

The protein belongs to the RapZ-like family.

Its function is as follows. Displays ATPase and GTPase activities. The sequence is that of Nucleotide-binding protein Sputcn32_0712 from Shewanella putrefaciens (strain CN-32 / ATCC BAA-453).